The following is a 631-amino-acid chain: tRNA uridine 5-carboxymethylaminomethyl modification enzyme MnmG (631 aa).

Residues 15-20 (GAGHAG), Ile127, and Ser182 each bind FAD. An NAD(+)-binding site is contributed by 276-290 (GPRYCPSIEDKIVRF). FAD is bound at residue Gln373.

This sequence belongs to the MnmG family. Homodimer. Heterotetramer of two MnmE and two MnmG subunits. Requires FAD as cofactor.

It localises to the cytoplasm. Functionally, NAD-binding protein involved in the addition of a carboxymethylaminomethyl (cmnm) group at the wobble position (U34) of certain tRNAs, forming tRNA-cmnm(5)s(2)U34. The protein is tRNA uridine 5-carboxymethylaminomethyl modification enzyme MnmG of Streptococcus mutans serotype c (strain ATCC 700610 / UA159).